The sequence spans 1044 residues: Integrin alpha-V (1044 aa).

An N-terminal signal peptide occupies residues 1-30; sequence MAAPGRLLLRPRPGGLLLLLPGLLLPLADA. Residues 31-988 lie on the Extracellular side of the membrane; the sequence is FNLDVESPAE…WGIQPAPMPV (958 aa). FG-GAP repeat units lie at residues 32-98, 109-170, 173-225, 237-291, 292-357, 358-415, and 419-482; these read NLDV…RRCQ, DYAK…VEYA, RSKN…ISKY, QLAT…GKNM, SSLH…GDFQ, TTKL…GLNS, and QILE…VYPS. Asparagine 74 is a glycosylation site (N-linked (GlcNAc...) asparagine). Disulfide bonds link cysteine 89–cysteine 97, cysteine 138–cysteine 158, and cysteine 172–cysteine 185. Ca(2+) is bound by residues aspartate 260, asparagine 262, aspartate 264, isoleucine 266, and aspartate 268. N-linked (GlcNAc...) asparagine glycans are attached at residues asparagine 290 and asparagine 296. Ca(2+)-binding residues include aspartate 314, asparagine 316, aspartate 318, tyrosine 320, aspartate 322, aspartate 379, aspartate 381, aspartate 383, phenylalanine 385, aspartate 387, aspartate 443, aspartate 445, asparagine 447, tyrosine 449, and aspartate 451. 2 disulfide bridges follow: cysteine 491–cysteine 502 and cysteine 508–cysteine 565. The N-linked (GlcNAc...) asparagine glycan is linked to asparagine 615. 2 disulfides stabilise this stretch: cysteine 626-cysteine 632 and cysteine 698-cysteine 711. Residues asparagine 704, asparagine 835, asparagine 851, and asparagine 869 are each glycosylated (N-linked (GlcNAc...) asparagine). Cystine bridges form between cysteine 852-cysteine 910 and cysteine 900-cysteine 905. Residues asparagine 941, asparagine 969, and asparagine 976 are each glycosylated (N-linked (GlcNAc...) asparagine). A helical membrane pass occupies residues 989-1012; it reads PVWVIILAVLAGLLLLAVLVFVMY. At 1013 to 1044 the chain is on the cytoplasmic side; sequence RMGFFKRVRPPQEEQEREQLQPHENGEGNSET. The GFFKR motif motif lies at 1015–1019; that stretch reads GFFKR. The segment covering 1023–1038 has biased composition (basic and acidic residues); that stretch reads PQEEQEREQLQPHENG. The tract at residues 1023–1044 is disordered; sequence PQEEQEREQLQPHENGEGNSET.

It belongs to the integrin alpha chain family. Heterodimer of an alpha and a beta subunit. The alpha subunit is composed of a heavy and a light chain linked by a disulfide bond. Alpha-V (ITGAV) associates with either beta-1 (ITGB1), beta-3 (ITGB3), beta-5 (ITGB5), beta-6 (ITGB6) or beta-8 (ITGB8). Interacts with RAB25. Interacts with CIB1. Integrins ITGAV:ITGB3 and ITGAV:ITGB5 interact with FBLN5 (via N-terminus). ITGAV:ITGB3 and ITGAV:ITGB5 interact with CCN3. ITGAV:ITGB3 interacts with ADGRA2. ITGAV:ITGB3 interacts with FGF2; it is likely that FGF2 can simultaneously bind ITGAV:ITGB3 and FGF receptors. ITGAV:ITGB3 interacts with SELP (via C-type lectin domain); the interaction mediates cell-cell interaction and adhesion. ITGAV:ITGB3 is found in a ternary complex with CX3CR1 and CX3CL1. ITGAV:ITGB3 is found in a ternary complex with NRG1 and ERBB3. ITGAV:ITGB3 is found in a ternary complex with FGF1 and FGFR1. ITGAV:ITGB3 is found in a ternary complex with IGF1 and IGF1R. ITGAV:ITGB3 interacts with IGF2. ITGAV:ITGB3 and ITGAV:ITGB6 interact with FBN1. ITGAV:ITGB3 interacts with CD9, CD81 and CD151 (via second extracellular domain). ITGAV:ITGB6 interacts with TGFB1. ITGAV:ITGB3 interacts with PTN. Forms a complex with PTPRZ1 and PTN that stimulates endothelial cell migration through ITGB3 'Tyr-773' phosphorylation. Interacts with TM4SF19.

Its subcellular location is the cell membrane. The protein resides in the cell junction. It is found in the focal adhesion. The alpha-V (ITGAV) integrins are receptors for vitronectin, cytotactin, fibronectin, fibrinogen, laminin, matrix metalloproteinase-2, osteopontin, osteomodulin, prothrombin, thrombospondin, TGFB1 and vWF. They recognize the sequence R-G-D in a wide array of ligands. Alpha-V integrins may play a role in embryo implantation, angiogenesis and wound healing. ITGAV:ITGB3 binds to fractalkine (CX3CL1) and may act as its coreceptor in CX3CR1-dependent fractalkine signaling. ITGAV:ITGB3 binds to NRG1 (via EGF domain) and this binding is essential for NRG1-ERBB signaling. ITGAV:ITGB3 binds to FGF1 and this binding is essential for FGF1 signaling. ITGAV:ITGB3 binds to FGF2 and this binding is essential for FGF2 signaling. ITGAV:ITGB3 binds to IGF1 and this binding is essential for IGF1 signaling. ITGAV:ITGB3 binds to IGF2 and this binding is essential for IGF2 signaling. ITGAV:ITGB3 binds to IL1B and this binding is essential for IL1B signaling. ITGAV:ITGB3 binds to PLA2G2A via a site (site 2) which is distinct from the classical ligand-binding site (site 1) and this induces integrin conformational changes and enhanced ligand binding to site 1. ITGAV:ITGB3 and ITGAV:ITGB6 act as a receptor for fibrillin-1 (FBN1) and mediate R-G-D-dependent cell adhesion to FBN1. Integrin alpha-V/beta-6 or alpha-V/beta-8 (ITGAV:ITGB6 or ITGAV:ITGB8) mediates R-G-D-dependent release of transforming growth factor beta-1 (TGF-beta-1) from regulatory Latency-associated peptide (LAP), thereby playing a key role in TGF-beta-1 activation. ITGAV:ITGB3 acts as a receptor for CD40LG. ITGAV:ITGB3 binds to the Lilrb4a/Gp49b receptor and enhances the Lilrb4a-mediated inhibition of mast cell activation. ITGAV:ITGB3 also suppresses marginal zone B cell antibody production through its interaction with Lilrb4a. ITGAV:ITGB3 acts as a receptor for IBSP and promotes cell adhesion and migration to IBSP. The protein is Integrin alpha-V (Itgav) of Mus musculus (Mouse).